Reading from the N-terminus, the 556-residue chain is 2-succinyl-5-enolpyruvyl-6-hydroxy-3-cyclohexene-1-carboxylate synthase (556 aa).

This sequence belongs to the TPP enzyme family. MenD subfamily. In terms of assembly, homodimer. Mg(2+) is required as a cofactor. Requires Mn(2+) as cofactor. Thiamine diphosphate serves as cofactor.

The catalysed reaction is isochorismate + 2-oxoglutarate + H(+) = 5-enolpyruvoyl-6-hydroxy-2-succinyl-cyclohex-3-ene-1-carboxylate + CO2. It functions in the pathway quinol/quinone metabolism; 1,4-dihydroxy-2-naphthoate biosynthesis; 1,4-dihydroxy-2-naphthoate from chorismate: step 2/7. The protein operates within quinol/quinone metabolism; menaquinone biosynthesis. In terms of biological role, catalyzes the thiamine diphosphate-dependent decarboxylation of 2-oxoglutarate and the subsequent addition of the resulting succinic semialdehyde-thiamine pyrophosphate anion to isochorismate to yield 2-succinyl-5-enolpyruvyl-6-hydroxy-3-cyclohexene-1-carboxylate (SEPHCHC). The protein is 2-succinyl-5-enolpyruvyl-6-hydroxy-3-cyclohexene-1-carboxylate synthase of Staphylococcus epidermidis (strain ATCC 35984 / DSM 28319 / BCRC 17069 / CCUG 31568 / BM 3577 / RP62A).